The chain runs to 364 residues: Putative glutamate--cysteine ligase 2-2 (364 aa).

This sequence belongs to the glutamate--cysteine ligase type 2 family. YbdK subfamily.

The enzyme catalyses L-cysteine + L-glutamate + ATP = gamma-L-glutamyl-L-cysteine + ADP + phosphate + H(+). Its function is as follows. ATP-dependent carboxylate-amine ligase which exhibits weak glutamate--cysteine ligase activity. The sequence is that of Putative glutamate--cysteine ligase 2-2 from Mycobacterium sp. (strain JLS).